The primary structure comprises 378 residues: Chaperone protein DnaJ (378 aa).

The J domain maps to Asp5–Gly70. The CR-type zinc finger occupies Gly133–Ser211. Zn(2+) is bound by residues Cys146, Cys149, Cys163, Cys166, Cys185, Cys188, Cys199, and Cys202. CXXCXGXG motif repeat units follow at residues Cys146–Gly153, Cys163–Gly170, Cys185–Gly192, and Cys199–Gly206.

It belongs to the DnaJ family. As to quaternary structure, homodimer. Zn(2+) serves as cofactor.

The protein resides in the cytoplasm. Functionally, participates actively in the response to hyperosmotic and heat shock by preventing the aggregation of stress-denatured proteins and by disaggregating proteins, also in an autonomous, DnaK-independent fashion. Unfolded proteins bind initially to DnaJ; upon interaction with the DnaJ-bound protein, DnaK hydrolyzes its bound ATP, resulting in the formation of a stable complex. GrpE releases ADP from DnaK; ATP binding to DnaK triggers the release of the substrate protein, thus completing the reaction cycle. Several rounds of ATP-dependent interactions between DnaJ, DnaK and GrpE are required for fully efficient folding. Also involved, together with DnaK and GrpE, in the DNA replication of plasmids through activation of initiation proteins. This chain is Chaperone protein DnaJ, found in Pectobacterium carotovorum subsp. carotovorum (strain PC1).